The chain runs to 287 residues: Orotidine 5'-phosphate decarboxylase (287 aa).

The active-site Proton donor is Lys-99.

It belongs to the OMP decarboxylase family. Type 2 subfamily.

It catalyses the reaction orotidine 5'-phosphate + H(+) = UMP + CO2. Its pathway is pyrimidine metabolism; UMP biosynthesis via de novo pathway; UMP from orotate: step 2/2. This is Orotidine 5'-phosphate decarboxylase from Clostridium novyi (strain NT).